Here is a 130-residue protein sequence, read N- to C-terminus: Small ribosomal subunit protein uS9 (130 aa).

This sequence belongs to the universal ribosomal protein uS9 family.

The sequence is that of Small ribosomal subunit protein uS9 from Xanthomonas campestris pv. campestris (strain 8004).